A 593-amino-acid chain; its full sequence is Aspartate--tRNA ligase (593 aa).

E181 is a binding site for L-aspartate. The tract at residues 205–208 (QLYK) is aspartate. R227 contributes to the L-aspartate binding site. Residues 227-229 (RDE) and Q236 each bind ATP. L-aspartate is bound at residue H455. E489 is an ATP binding site. L-aspartate is bound at residue R496. 541–544 (GLDR) contacts ATP.

Belongs to the class-II aminoacyl-tRNA synthetase family. Type 1 subfamily. In terms of assembly, homodimer.

The protein resides in the cytoplasm. It carries out the reaction tRNA(Asp) + L-aspartate + ATP = L-aspartyl-tRNA(Asp) + AMP + diphosphate. Its function is as follows. Catalyzes the attachment of L-aspartate to tRNA(Asp) in a two-step reaction: L-aspartate is first activated by ATP to form Asp-AMP and then transferred to the acceptor end of tRNA(Asp). In Ruminiclostridium cellulolyticum (strain ATCC 35319 / DSM 5812 / JCM 6584 / H10) (Clostridium cellulolyticum), this protein is Aspartate--tRNA ligase.